We begin with the raw amino-acid sequence, 235 residues long: Type III pantothenate kinase (235 aa).

6 to 13 (DVGNNYIK) contacts ATP. Residues Tyr-81 and 88–91 (GTDR) contribute to the substrate site. The active-site Proton acceptor is the Asp-90. K(+) is bound at residue Asp-111. Residue Thr-114 participates in ATP binding. Residue Thr-166 participates in substrate binding.

Belongs to the type III pantothenate kinase family. In terms of assembly, homodimer. The cofactor is NH4(+). Requires K(+) as cofactor.

The protein localises to the cytoplasm. The catalysed reaction is (R)-pantothenate + ATP = (R)-4'-phosphopantothenate + ADP + H(+). Its pathway is cofactor biosynthesis; coenzyme A biosynthesis; CoA from (R)-pantothenate: step 1/5. In terms of biological role, catalyzes the phosphorylation of pantothenate (Pan), the first step in CoA biosynthesis. The polypeptide is Type III pantothenate kinase (Cytophaga hutchinsonii (strain ATCC 33406 / DSM 1761 / CIP 103989 / NBRC 15051 / NCIMB 9469 / D465)).